The primary structure comprises 363 residues: Peptide chain release factor 1 (363 aa).

At glutamine 237 the chain carries N5-methylglutamine. Residues 287–299 show a composition bias toward basic and acidic residues; the sequence is EQHKEQASTRKEL. Residues 287–306 are disordered; that stretch reads EQHKEQASTRKELIGSGDRS.

Belongs to the prokaryotic/mitochondrial release factor family. In terms of processing, methylated by PrmC. Methylation increases the termination efficiency of RF1.

The protein resides in the cytoplasm. Functionally, peptide chain release factor 1 directs the termination of translation in response to the peptide chain termination codons UAG and UAA. The sequence is that of Peptide chain release factor 1 from Ruthia magnifica subsp. Calyptogena magnifica.